The following is a 68-amino-acid chain: Alpha-conotoxin-like Lt1.2 (68 aa).

An N-terminal signal peptide occupies residues 1–21; sequence MGMRMMFIMFMLVVLATTVDT. The propeptide occupies 22–48; it reads FTSDRALDAMNAAASNKASRLIALAVR. 2 disulfide bridges follow: C50-C56 and C51-C64. The segment at 52–54 is lacks the Ser-Xaa-Pro motif that is crucial for potent interaction with nAChR; that stretch reads ARA. G65 carries the post-translational modification Glycine amide.

Belongs to the conotoxin A superfamily. Expressed by the venom duct.

It is found in the secreted. Its function is as follows. Alpha-conotoxins act on postsynaptic membranes, they bind to the nicotinic acetylcholine receptors (nAChR) and thus inhibit them. Has a distinct nAChR binding mode from other alpha-conotoxins, due to a different three residue motif (Ala-Xaa-Ala instead of the conserved Ser-Xaa-Pro motif). In Conus litteratus (Lettered cone), this protein is Alpha-conotoxin-like Lt1.2.